The chain runs to 381 residues: Protein palisade (381 aa).

A signal peptide spans 1-25 (MMMHSRNRSWTLTLLALGVVLATSA). 6 consecutive repeat copies span residues 190-199 (PAAPAYEAPA), 200-209 (PPAPAYEAPA), 210-219 (PPAPAYEAPA), 220-229 (PAAPAYEAPA), 230-239 (PAAPAYEAPT), and 247-256 (PPAPAYEPPA). Positions 190-256 (PAAPAYEAPA…PPAPAYEPPA (67 aa)) are 6 X 10 AA approximate tandem repeats of P-[AP]-A-P-A-Y-E-[AP]-P-[AT]. Disordered stretches follow at residues 236 to 270 (EAPTTDYSAPAPPAPAYEPPASSYTQGYSQPAQPS) and 309 to 329 (TPTAPPPPPPPAPVYEAPSQN). A compositionally biased stretch (pro residues) spans 311–321 (TAPPPPPPPAP).

Sulfated by pip; may be involved in embryo dorsal-ventral axis determination. Sulfation by pip may occur on covalently bound glycosaminoglycans. Post-translationally, may undergo both disulfide and non-disulfide cross-linking upon incorporation into the vitelline membrane. As to expression, present in the perivitelline space of stage 10 egg chambers and in the vitelline membrane adjacent to the oocyte in stage 13 and 14 egg chambers (at protein level).

Its subcellular location is the secreted. It localises to the extracellular space. It is found in the extracellular matrix. In terms of biological role, minor protein component of the vitelline membrane. Involved in vitelline membrane biogenesis during late stages of oogenesis. Required for efficient disulfide and non-disulfide cross-linking of several vitelline membrane components. This chain is Protein palisade, found in Drosophila melanogaster (Fruit fly).